The following is a 108-amino-acid chain: Large ribosomal subunit protein eL30 (108 aa).

This sequence belongs to the eukaryotic ribosomal protein eL30 family.

The chain is Large ribosomal subunit protein eL30 (rpl30e) from Saccharolobus solfataricus (strain ATCC 35092 / DSM 1617 / JCM 11322 / P2) (Sulfolobus solfataricus).